A 180-amino-acid chain; its full sequence is ATP synthase subunit delta (180 aa).

The protein belongs to the ATPase delta chain family. F-type ATPases have 2 components, F(1) - the catalytic core - and F(0) - the membrane proton channel. F(1) has five subunits: alpha(3), beta(3), gamma(1), delta(1), epsilon(1). F(0) has three main subunits: a(1), b(2) and c(10-14). The alpha and beta chains form an alternating ring which encloses part of the gamma chain. F(1) is attached to F(0) by a central stalk formed by the gamma and epsilon chains, while a peripheral stalk is formed by the delta and b chains.

Its subcellular location is the cell membrane. Functionally, f(1)F(0) ATP synthase produces ATP from ADP in the presence of a proton or sodium gradient. F-type ATPases consist of two structural domains, F(1) containing the extramembraneous catalytic core and F(0) containing the membrane proton channel, linked together by a central stalk and a peripheral stalk. During catalysis, ATP synthesis in the catalytic domain of F(1) is coupled via a rotary mechanism of the central stalk subunits to proton translocation. In terms of biological role, this protein is part of the stalk that links CF(0) to CF(1). It either transmits conformational changes from CF(0) to CF(1) or is implicated in proton conduction. This Bacillus mycoides (strain KBAB4) (Bacillus weihenstephanensis) protein is ATP synthase subunit delta.